The chain runs to 404 residues: Tryptophan synthase beta chain (404 aa).

Lys98 is subject to N6-(pyridoxal phosphate)lysine.

It belongs to the TrpB family. As to quaternary structure, tetramer of two alpha and two beta chains. It depends on pyridoxal 5'-phosphate as a cofactor.

The catalysed reaction is (1S,2R)-1-C-(indol-3-yl)glycerol 3-phosphate + L-serine = D-glyceraldehyde 3-phosphate + L-tryptophan + H2O. Its pathway is amino-acid biosynthesis; L-tryptophan biosynthesis; L-tryptophan from chorismate: step 5/5. In terms of biological role, the beta subunit is responsible for the synthesis of L-tryptophan from indole and L-serine. The polypeptide is Tryptophan synthase beta chain (Rhodopseudomonas palustris (strain BisA53)).